The chain runs to 419 residues: L-rhamnose isomerase (419 aa).

The Mn(2+) site is built by H262, D294, and D296.

Belongs to the rhamnose isomerase family. In terms of assembly, homotetramer. Mn(2+) is required as a cofactor.

It is found in the cytoplasm. The catalysed reaction is L-rhamnopyranose = L-rhamnulose. It functions in the pathway carbohydrate degradation; L-rhamnose degradation; glycerone phosphate from L-rhamnose: step 1/3. Functionally, catalyzes the interconversion of L-rhamnose and L-rhamnulose. This Citrobacter koseri (strain ATCC BAA-895 / CDC 4225-83 / SGSC4696) protein is L-rhamnose isomerase.